The primary structure comprises 571 residues: Acetolactate synthase large subunit (571 aa).

Residue Glu-51 coordinates thiamine diphosphate. Residues Arg-153, 261-282, and 304-323 each bind FAD; these read HGTY…IGVR and DIDP…IVGD. Residues 394–474 form a thiamine pyrophosphate binding region; the sequence is QHQMFTALYY…VLILNLNNSS (81 aa). Asp-445 and Asn-472 together coordinate Mg(2+).

This sequence belongs to the TPP enzyme family. Dimer of large and small chains. It depends on Mg(2+) as a cofactor. The cofactor is thiamine diphosphate.

It carries out the reaction 2 pyruvate + H(+) = (2S)-2-acetolactate + CO2. It participates in amino-acid biosynthesis; L-isoleucine biosynthesis; L-isoleucine from 2-oxobutanoate: step 1/4. The protein operates within amino-acid biosynthesis; L-valine biosynthesis; L-valine from pyruvate: step 1/4. In Buchnera aphidicola subsp. Schizaphis graminum (strain Sg), this protein is Acetolactate synthase large subunit (ilvI).